The chain runs to 321 residues: Cytochrome c biogenesis protein CcsA (321 aa).

The next 7 helical transmembrane spans lie at 9-29 (ILTHISFSTISIVITIHLITL), 44-64 (GMIATFFSITGFLVSRWVSSG), 68-88 (LSNLYESLIFLSWTLYILHTI), 143-163 (MLLSYATLLCGSLLSAALLII), 225-245 (VISLGFTLLTVGILCGAVWAN), 259-273 (TWAFITWTIFAIYLH), and 288-308 (VASIGFLIIWICYFGINLLGI).

This sequence belongs to the CcmF/CycK/Ccl1/NrfE/CcsA family. As to quaternary structure, may interact with Ccs1.

It localises to the plastid. It is found in the chloroplast thylakoid membrane. Its function is as follows. Required during biogenesis of c-type cytochromes (cytochrome c6 and cytochrome f) at the step of heme attachment. This is Cytochrome c biogenesis protein CcsA from Zea mays (Maize).